Consider the following 1748-residue polypeptide: WD repeat-containing protein 90 (1748 aa).

The tract at residues Met-1–Phe-207 is binds with microtubules. Position 241 is a phosphoserine (Ser-241). The tract at residues Gln-274–Gly-308 is disordered. WD repeat units follow at residues Gly-407 to Arg-450, Pro-452 to Glu-494, Ala-501 to Cys-541, Ser-615 to Glu-654, Glu-656 to Leu-695, Ser-698 to Asp-737, Ser-740 to Glu-779, Cys-782 to Leu-821, Ser-882 to Glu-922, Val-926 to Pro-964, Gly-969 to Pro-1009, Gly-1156 to Leu-1201, Pro-1204 to Ser-1245, Arg-1247 to Ser-1286, Val-1298 to Trp-1326, Asp-1327 to Cys-1376, Gly-1433 to Gln-1472, Val-1475 to Lys-1520, Pro-1523 to Val-1562, Gly-1568 to Glu-1614, and Gly-1715 to Leu-1748. The tract at residues Ser-1004–Ala-1071 is disordered.

This sequence belongs to the WD repeat WDR90/POC16 family.

The protein localises to the cytoplasm. Its subcellular location is the cytoskeleton. It localises to the microtubule organizing center. The protein resides in the centrosome. It is found in the centriole. The protein localises to the centriolar satellite. Microtubule-binding protein that plays a crucial role in ensuring inner core protein localization within the centriole core, as well as in maintaining the microtubule wall integrity and the overall centriole roundness and stability. Required for efficient primary cilium formation. The chain is WD repeat-containing protein 90 (WDR90) from Homo sapiens (Human).